The sequence spans 217 residues: Large ribosomal subunit protein uL3 (217 aa).

The disordered stretch occupies residues 137–160; the sequence is VSASHGSHRNHRKPGSIGASSTPS.

Belongs to the universal ribosomal protein uL3 family. Part of the 50S ribosomal subunit. Forms a cluster with proteins L14 and L19.

Its function is as follows. One of the primary rRNA binding proteins, it binds directly near the 3'-end of the 23S rRNA, where it nucleates assembly of the 50S subunit. The protein is Large ribosomal subunit protein uL3 of Clavibacter michiganensis subsp. michiganensis (strain NCPPB 382).